The sequence spans 315 residues: Methionyl-tRNA formyltransferase (315 aa).

113–116 is a binding site for (6S)-5,6,7,8-tetrahydrofolate; the sequence is SILP.

The protein belongs to the Fmt family.

The catalysed reaction is L-methionyl-tRNA(fMet) + (6R)-10-formyltetrahydrofolate = N-formyl-L-methionyl-tRNA(fMet) + (6S)-5,6,7,8-tetrahydrofolate + H(+). In terms of biological role, attaches a formyl group to the free amino group of methionyl-tRNA(fMet). The formyl group appears to play a dual role in the initiator identity of N-formylmethionyl-tRNA by promoting its recognition by IF2 and preventing the misappropriation of this tRNA by the elongation apparatus. This is Methionyl-tRNA formyltransferase from Vibrio vulnificus (strain YJ016).